We begin with the raw amino-acid sequence, 472 residues long: Ribosomal protein uS12 methylthiotransferase RimO (472 aa).

The 111-residue stretch at 33–143 (NRIGFVSLGC…VLKHVHKYVP (111 aa)) folds into the MTTase N-terminal domain. 6 residues coordinate [4Fe-4S] cluster: Cys-42, Cys-78, Cys-107, Cys-175, Cys-179, and Cys-182. The 238-residue stretch at 161 to 398 (LTPKHYAYLK…MEVQAEISAE (238 aa)) folds into the Radical SAM core domain. Residues 401–467 (ARFVGRTLDI…EHDLWAEVVD (67 aa)) form the TRAM domain.

It belongs to the methylthiotransferase family. RimO subfamily. [4Fe-4S] cluster serves as cofactor.

It is found in the cytoplasm. It catalyses the reaction L-aspartate(89)-[ribosomal protein uS12]-hydrogen + (sulfur carrier)-SH + AH2 + 2 S-adenosyl-L-methionine = 3-methylsulfanyl-L-aspartate(89)-[ribosomal protein uS12]-hydrogen + (sulfur carrier)-H + 5'-deoxyadenosine + L-methionine + A + S-adenosyl-L-homocysteine + 2 H(+). In terms of biological role, catalyzes the methylthiolation of an aspartic acid residue of ribosomal protein uS12. The protein is Ribosomal protein uS12 methylthiotransferase RimO of Shewanella baltica (strain OS195).